The chain runs to 353 residues: Photosystem II D2 protein (353 aa).

An N-acetylthreonine modification is found at Thr2. Residue Thr2 is modified to Phosphothreonine. A helical membrane pass occupies residues 41-61; it reads CAYFALGGWFTGTTFVTSWYT. His118 is a chlorophyll a binding site. A helical membrane pass occupies residues 125–141; sequence GFMLRQFELARSVQLRP. The pheophytin a site is built by Gln130 and Asn143. The helical transmembrane segment at 153–166 threads the bilayer; that stretch reads VFVSVFLIYPLGQS. A chlorophyll a-binding site is contributed by His198. A helical transmembrane segment spans residues 208-228; that stretch reads AALLCAIHGATVENTLFEDGD. The a plastoquinone site is built by His215 and Phe262. His215 contacts Fe cation. His269 is a Fe cation binding site. Residues 279 to 295 form a helical membrane-spanning segment; sequence GLWMSALGVVGLALNLR.

Belongs to the reaction center PufL/M/PsbA/D family. In terms of assembly, PSII is composed of 1 copy each of membrane proteins PsbA, PsbB, PsbC, PsbD, PsbE, PsbF, PsbH, PsbI, PsbJ, PsbK, PsbL, PsbM, PsbT, PsbX, PsbY, PsbZ, Psb30/Ycf12, at least 3 peripheral proteins of the oxygen-evolving complex and a large number of cofactors. It forms dimeric complexes. Requires The D1/D2 heterodimer binds P680, chlorophylls that are the primary electron donor of PSII, and subsequent electron acceptors. It shares a non-heme iron and each subunit binds pheophytin, quinone, additional chlorophylls, carotenoids and lipids. There is also a Cl(-1) ion associated with D1 and D2, which is required for oxygen evolution. The PSII complex binds additional chlorophylls, carotenoids and specific lipids. as cofactor.

The protein localises to the plastid. The protein resides in the chloroplast thylakoid membrane. The enzyme catalyses 2 a plastoquinone + 4 hnu + 2 H2O = 2 a plastoquinol + O2. In terms of biological role, photosystem II (PSII) is a light-driven water:plastoquinone oxidoreductase that uses light energy to abstract electrons from H(2)O, generating O(2) and a proton gradient subsequently used for ATP formation. It consists of a core antenna complex that captures photons, and an electron transfer chain that converts photonic excitation into a charge separation. The D1/D2 (PsbA/PsbD) reaction center heterodimer binds P680, the primary electron donor of PSII as well as several subsequent electron acceptors. D2 is needed for assembly of a stable PSII complex. The sequence is that of Photosystem II D2 protein from Amborella trichopoda.